The primary structure comprises 79 residues: Sec-independent protein translocase protein TatA (79 aa).

A helical transmembrane segment spans residues 1–21; it reads MGGISIWQLLIIALIVVLLFG. A disordered region spans residues 43–79; sequence MSSEEDKKALEDTEAAKTAQTTQQATEKKPESNKEQA. Over residues 46–57 the composition is skewed to basic and acidic residues; sequence EEDKKALEDTEA. Low complexity predominate over residues 58-67; sequence AKTAQTTQQA. Residues 68-79 show a composition bias toward basic and acidic residues; that stretch reads TEKKPESNKEQA.

The protein belongs to the TatA/E family. In terms of assembly, the Tat system comprises two distinct complexes: a TatABC complex, containing multiple copies of TatA, TatB and TatC subunits, and a separate TatA complex, containing only TatA subunits. Substrates initially bind to the TatABC complex, which probably triggers association of the separate TatA complex to form the active translocon.

The protein localises to the cell inner membrane. Its function is as follows. Part of the twin-arginine translocation (Tat) system that transports large folded proteins containing a characteristic twin-arginine motif in their signal peptide across membranes. TatA could form the protein-conducting channel of the Tat system. The polypeptide is Sec-independent protein translocase protein TatA (Shewanella putrefaciens (strain CN-32 / ATCC BAA-453)).